A 75-amino-acid polypeptide reads, in one-letter code: uncharacterized protein (75 aa).

This is an uncharacterized protein from Enterobacteria phage T4 (Bacteriophage T4).